We begin with the raw amino-acid sequence, 127 residues long: Large ribosomal subunit protein bL20 (127 aa).

Belongs to the bacterial ribosomal protein bL20 family.

In terms of biological role, binds directly to 23S ribosomal RNA and is necessary for the in vitro assembly process of the 50S ribosomal subunit. It is not involved in the protein synthesizing functions of that subunit. The protein is Large ribosomal subunit protein bL20 of Opitutus terrae (strain DSM 11246 / JCM 15787 / PB90-1).